Here is an 877-residue protein sequence, read N- to C-terminus: DNA mismatch repair protein MutS (877 aa).

Gly-630–Ser-637 contributes to the ATP binding site.

This sequence belongs to the DNA mismatch repair MutS family.

Its function is as follows. This protein is involved in the repair of mismatches in DNA. It is possible that it carries out the mismatch recognition step. This protein has a weak ATPase activity. The sequence is that of DNA mismatch repair protein MutS from Jannaschia sp. (strain CCS1).